A 356-amino-acid chain; its full sequence is Iron-regulated protein A (356 aa).

An N-terminal signal peptide occupies residues 1–44; that stretch reads MIVTGSQVRQGLNTWFVLPLRRTAIGLGCAGVATLFSACGQTQA. 2 hydrophilic regions span residues 75–145 and 240–310; these read QALQ…EQRE and GGPL…ATAR.

The iron-regulated protein A is one unit of the protein complex CPVI-4, which is synthesized under iron deficient conditions.

The protein resides in the cell inner membrane. IrpA occurs under iron-deficient growth conditions in cyanobacterium Synechococcus and disappears in cells recovering from iron starvation. It seems to be involved in iron acquisition, uptake or storage. The sequence is that of Iron-regulated protein A (irpA) from Synechococcus elongatus (strain ATCC 33912 / PCC 7942 / FACHB-805) (Anacystis nidulans R2).